We begin with the raw amino-acid sequence, 694 residues long: Putative bifunctional polynucleotide kinase/RNA ligase (694 aa).

The ligase domain stretch occupies residues M1–A385. The bifunctional 5'-OH polynucleotide kinase/polynucleotide 3'-phosphatase stretch occupies residues K394–F694. Position 401–408 (G401–S408) interacts with ATP.

It carries out the reaction a 5'-end dephospho-2'-deoxyribonucleoside-DNA + ATP = a 5'-end 5'-phospho-2'-deoxyribonucleoside-DNA + ADP + H(+). The catalysed reaction is ATP + (ribonucleotide)n-3'-hydroxyl + 5'-phospho-(ribonucleotide)m = (ribonucleotide)n+m + AMP + diphosphate.. Its function is as follows. Trifunctional enzyme that possesses a bifunctional polynucleotide kinase/phosphatase activity and an ATP-dependent RNA ligase activity. May therefore play a role to evade an RNA damage-based host response. This chain is Putative bifunctional polynucleotide kinase/RNA ligase (PNK/PNL), found in Autographa californica nuclear polyhedrosis virus (AcMNPV).